A 262-amino-acid polypeptide reads, in one-letter code: uncharacterized protein (262 aa).

Positions 6–70 constitute an S4 RNA-binding domain; it reads LRINQFLAHY…LKNKKFSVLV (65 aa). The active-site Nucleophile is the aspartate 108.

Belongs to the pseudouridine synthase RsuA family.

The enzyme catalyses a uridine in RNA = a pseudouridine in RNA. This is an uncharacterized protein from Helicobacter pylori (strain ATCC 700392 / 26695) (Campylobacter pylori).